Reading from the N-terminus, the 264-residue chain is Glucosamine-6-phosphate deaminase (264 aa).

Asp67 (proton acceptor; for enolization step) is an active-site residue. Asn136 (for ring-opening step) is an active-site residue. The Proton acceptor; for ring-opening step role is filled by His138. The active-site For ring-opening step is Glu143.

Belongs to the glucosamine/galactosamine-6-phosphate isomerase family. NagB subfamily. Homohexamer.

The catalysed reaction is alpha-D-glucosamine 6-phosphate + H2O = beta-D-fructose 6-phosphate + NH4(+). It participates in amino-sugar metabolism; N-acetylneuraminate degradation; D-fructose 6-phosphate from N-acetylneuraminate: step 5/5. In terms of biological role, catalyzes the reversible isomerization-deamination of glucosamine 6-phosphate (GlcN6P) to form fructose 6-phosphate (Fru6P) and ammonium ion. In Shewanella woodyi (strain ATCC 51908 / MS32), this protein is Glucosamine-6-phosphate deaminase.